Here is a 697-residue protein sequence, read N- to C-terminus: Potassium channel KAT2 (697 aa).

Residues 1-63 are Cytoplasmic-facing; it reads MSISCTRNFF…PFDPRFRGWE (63 aa). Residues 64–84 form a helical membrane-spanning segment; it reads MWLVILVIYSAWICPFEFAFI. Residues 85-91 are Extracellular-facing; it reads TYKKDAL. The helical transmembrane segment at 92–112 threads the bilayer; that stretch reads FIIDNIVNGFFAIDIILTFFV. Over 113-134 the chain is Cytoplasmic; sequence AYLDSHSYLLVDKPKKIAIRYL. The chain crosses the membrane as a helical span at residues 135–155; that stretch reads STWFAFDVCSTAPFQSLSLLF. Residues 156–165 are Extracellular-facing; sequence KYNGSEIGFR. Asn-158 carries an N-linked (GlcNAc...) asparagine glycan. Residues 166 to 186 traverse the membrane as a helical; Voltage-sensor segment; the sequence is VLSMLRLWRLRRVSSLFARLE. The Cytoplasmic portion of the chain corresponds to 187–200; the sequence is KDIRFNYFWTRCTK. Residues 201 to 221 form a helical membrane-spanning segment; that stretch reads LISVTLFAVHCAGCFAYLIAD. At 222 to 248 the chain is on the extracellular side; sequence QYHDPTKTWIGAVYPNFKETSVWSRYV. Positions 249–268 form an intramembrane region, pore-forming; sequence TALYWSITTLTTTGYGDLHA. At 269–272 the chain is on the extracellular side; the sequence is ENPR. The chain crosses the membrane as a helical span at residues 273–293; that stretch reads EMLFFVFFMLFNLGFTSYLIG. Over 294–697 the chain is Cytoplasmic; that stretch reads NMTNLVVHWT…HLYILINENS (404 aa). Residue 377 to 496 participates in a nucleoside 3',5'-cyclic phosphate binding; it reads LFHGVSRNFL…RVIMNNLFMK (120 aa). The KHA domain maps to 629–697; it reads RVTIHLKSRD…HLYILINENS (69 aa).

This sequence belongs to the potassium channel family. Plant (TC 1.A.1.4) subfamily. In terms of assembly, the potassium channel is probably composed of a homo- or heterotetrameric complex of pore-forming subunits. May interact with KAT1. Interacts with SLAC1. As to expression, expressed in guard cells of hypocotyls, stems leaves and petioles. Detected also in the phloem of minor veins and in flower at a lower level.

The protein localises to the membrane. In terms of biological role, highly selective inward-rectifying potassium channel. This voltage-dependent channel could mediate long-term potassium influx into guard cells leading to stomatal opening. Assuming opened or closed conformations in response to the voltage difference across the membrane, the channel is activated by hyperpolarization. The channel activity is enhanced upon external acidification. In Arabidopsis thaliana (Mouse-ear cress), this protein is Potassium channel KAT2 (KAT2).